The primary structure comprises 118 residues: Basic phospholipase A2 nigexine (118 aa).

7 disulfide bridges follow: Cys11–Cys70, Cys26–Cys117, Cys28–Cys44, Cys43–Cys98, Cys50–Cys91, Cys59–Cys84, and Cys77–Cys89. Positions 27, 29, and 31 each coordinate Ca(2+). His47 is a catalytic residue. A Ca(2+)-binding site is contributed by Asp48. Residues Glu52 to Lys69 carry the Coagulation factor Xa binding motif motif. The active site involves Asp92.

This sequence belongs to the phospholipase A2 family. Group I subfamily. D49 sub-subfamily. Requires Ca(2+) as cofactor. In terms of tissue distribution, expressed by the venom gland.

The protein localises to the secreted. The catalysed reaction is a 1,2-diacyl-sn-glycero-3-phosphocholine + H2O = a 1-acyl-sn-glycero-3-phosphocholine + a fatty acid + H(+). Snake venom phospholipase A2 (PLA2) that shows anticoagulant activity, has cytotoxic activity and affects neuromuscular transmission in vitro. PLA2 catalyzes the calcium-dependent hydrolysis of the 2-acyl groups in 3-sn-phosphoglycerides. The chain is Basic phospholipase A2 nigexine from Naja pallida (Red spitting cobra).